We begin with the raw amino-acid sequence, 156 residues long: Cytochrome c-type biogenesis protein CcmE 1 (156 aa).

The Cytoplasmic segment spans residues 1 to 8 (MNATRKQR). A helical; Signal-anchor for type II membrane protein transmembrane segment spans residues 9–29 (LCLVIGVLAAAALAVTLIVFA). Residues 30-156 (LQRNMSYLFT…ATAAPLTTPR (127 aa)) lie on the Periplasmic side of the membrane. His123 and Tyr127 together coordinate heme.

It belongs to the CcmE/CycJ family.

Its subcellular location is the cell inner membrane. Heme chaperone required for the biogenesis of c-type cytochromes. Transiently binds heme delivered by CcmC and transfers the heme to apo-cytochromes in a process facilitated by CcmF and CcmH. The polypeptide is Cytochrome c-type biogenesis protein CcmE 1 (Xanthomonas oryzae pv. oryzae (strain MAFF 311018)).